We begin with the raw amino-acid sequence, 367 residues long: Heme A synthase (367 aa).

5 consecutive transmembrane segments (helical) span residues 12-32, 99-119, 127-147, 163-183, and 198-218; these read GAVR…VAVG, LLGR…WWQG, LGLL…WIMV, LALH…LAAG, and ATAL…GLVA. His264 lines the heme pocket. A run of 3 helical transmembrane segments spans residues 266 to 286, 296 to 316, and 317 to 337; these read VTAY…RLTG, GVVI…LLAV, and PLWA…MATV. His324 provides a ligand contact to heme.

This sequence belongs to the COX15/CtaA family. Type 2 subfamily. Interacts with CtaB. Heme b is required as a cofactor.

The protein localises to the cell membrane. It carries out the reaction Fe(II)-heme o + 2 A + H2O = Fe(II)-heme a + 2 AH2. Its pathway is porphyrin-containing compound metabolism; heme A biosynthesis; heme A from heme O: step 1/1. Catalyzes the conversion of heme O to heme A by two successive hydroxylations of the methyl group at C8. The first hydroxylation forms heme I, the second hydroxylation results in an unstable dihydroxymethyl group, which spontaneously dehydrates, resulting in the formyl group of heme A. In Methylobacterium radiotolerans (strain ATCC 27329 / DSM 1819 / JCM 2831 / NBRC 15690 / NCIMB 10815 / 0-1), this protein is Heme A synthase.